The chain runs to 354 residues: Ferrochelatase (354 aa).

Fe cation is bound by residues His-204 and Glu-306.

It belongs to the ferrochelatase family.

It is found in the cytoplasm. The enzyme catalyses heme b + 2 H(+) = protoporphyrin IX + Fe(2+). It functions in the pathway porphyrin-containing compound metabolism; protoheme biosynthesis; protoheme from protoporphyrin-IX: step 1/1. Its function is as follows. Catalyzes the ferrous insertion into protoporphyrin IX. This is Ferrochelatase from Coxiella burnetii (strain RSA 493 / Nine Mile phase I).